A 326-amino-acid chain; its full sequence is Homocysteine S-methyltransferase 1 (326 aa).

Residues 9 to 323 enclose the Hcy-binding domain; sequence LLEDLIKKCG…STINAISRDL (315 aa). 3 residues coordinate Zn(2+): Cys241, Cys308, and Cys309.

Monomer. Zn(2+) serves as cofactor. As to expression, expressed predominantly in roots. Expressed in rosette leaves, cauline leaves and developing seeds.

It catalyses the reaction S-methyl-L-methionine + L-homocysteine = 2 L-methionine + H(+). With respect to regulation, strongly inhibited by methionine. Catalyzes methyl transfer from S-methylmethionine (SMM) to adenosyl-L-homocysteine (AdoMet). SMM degradation (by HMT-1, HMT-2 and HMT-3) and biosynthesis (by MMT1) constitute the SMM cycle in plants, which is probably required to achieve short term control of AdoMet level. In Arabidopsis thaliana (Mouse-ear cress), this protein is Homocysteine S-methyltransferase 1 (HMT-1).